The chain runs to 647 residues: A-type voltage-gated potassium channel KCND1 (647 aa).

Residues 1–183 (MAAGLATWLP…RAFENPHTST (183 aa)) lie on the Cytoplasmic side of the membrane. The interaction with KCNIP1, KCNIP2, and other family members stretch occupies residues 2–20 (AAGLATWLPFARAAAVGWL). Zn(2+) is bound by residues H104, C131, and C132. The interval 144–163 (AERLAEDEEAEQAGDGPALP) is disordered. The helical transmembrane segment at 184–205 (AALVFYYVTGFFIAVSVIANVV) threads the bilayer. At 206-230 (ETIPCRGSARRSSREQPCGERFPQA) the chain is on the extracellular side. Residues 231 to 252 (FFCMDTACVLIFTGEYLLRLFA) form a helical membrane-spanning segment. Residues 253 to 263 (APSRCRFLRSV) are Cytoplasmic-facing. Residues 264–284 (MSLIDVVAILPYYIGLLVPKN) form a helical membrane-spanning segment. The Extracellular portion of the chain corresponds to 285-287 (DDV). Residues 288–308 (SGAFVTLRVFRVFRIFKFSRH) form a helical; Voltage-sensor membrane-spanning segment. Topologically, residues 309–323 (SQGLRILGYTLKSCA) are cytoplasmic. Positions 310–323 (QGLRILGYTLKSCA) are S4-S5 linker. The helical transmembrane segment at 324 to 345 (SELGFLLFSLTMAIIIFATVMF) threads the bilayer. Residues 346–359 (YAEKGTNKTNFTSI) lie on the Extracellular side of the membrane. N-linked (GlcNAc...) asparagine glycosylation is found at N352 and N355. Residues 360–371 (PAAFWYTIVTMT) constitute an intramembrane region (helical). Positions 372–377 (TLGYGD) match the Selectivity filter motif. Residues 372-379 (TLGYGDMV) lie within the membrane without spanning it. Topologically, residues 380 to 386 (PSTIAGK) are extracellular. A helical transmembrane segment spans residues 387–415 (IFGSICSLSGVLVIALPVPVIVSNFSRIY). Topologically, residues 416–647 (HQNQRADKRR…FPETVKISSL (232 aa)) are cytoplasmic. S458 carries the phosphoserine modification. Residues 474–489 (FEQQHHHLLHCLEKTT) are required for dendritic targeting. Residues 506–524 (VSPGGRTSRSTSVSSQPVG) show a composition bias toward low complexity. The segment at 506–531 (VSPGGRTSRSTSVSSQPVGPGSLLSS) is disordered. S555 carries the phosphoserine modification. The segment at 601–634 (IPTPPANTPDESQPSSPGGGGRAGSTLRNSSLGT) is disordered.

This sequence belongs to the potassium channel family. D (Shal) (TC 1.A.1.2) subfamily. Kv4.1/KCND1 sub-subfamily. As to quaternary structure, component of heteromultimeric potassium channels. Identified in potassium channel complexes containing KCND1, KCND2, KCND3, KCNIP1, KCNIP2, KCNIP3, KCNIP4, DPP6 and DPP10. In terms of tissue distribution, widely expressed. Highly expressed in brain, in particular in cerebellum and thalamus; detected at lower levels in the other parts of the brain.

It localises to the cell membrane. It catalyses the reaction K(+)(in) = K(+)(out). Functionally, A-type voltage-gated potassium channel that mediates transmembrane potassium transport in excitable membranes in the brain. Mediates A-type current I(SA) in suprachiasmatic nucleus (SCN) neurons. Exhibits a low-threshold A-type current with a hyperpolarized steady-state inactivation midpoint and the recovery process was steeply voltage-dependent, with recovery being markedly faster at more negative potentials. May regulates repetitive firing rates in the suprachiasmatic nucleus (SCN) neurons and circadian rhythms in neuronal excitability and behavior. Contributes to the regulation of the circadian rhythm of action potential firing in suprachiasmatic nucleus neurons, which regulates the circadian rhythm of locomotor activity. The regulatory subunit KCNIP1 modulates the kinetics of channel inactivation, increases the current amplitudes and accelerates recovery from inactivation, shifts activation in a depolarizing direction. The regulatory subunit DPP10 decreases the voltage sensitivity of the inactivation channel gating. This Homo sapiens (Human) protein is A-type voltage-gated potassium channel KCND1.